A 186-amino-acid chain; its full sequence is Mating-type-like protein ALPHA2 (186 aa).

Residues 108 to 170 constitute a DNA-binding region (homeobox; TALE-type); it reads ASYRGHRFTR…NRRRKQKSIY (63 aa).

This sequence belongs to the TALE/M-ATYP homeobox family.

Its subcellular location is the nucleus. Mating type proteins are sequence specific DNA-binding proteins that act as master switches in yeast differentiation by controlling gene expression in a cell type-specific fashion. This chain is Mating-type-like protein ALPHA2 (MTL1ALPHA2), found in Candida glabrata (strain ATCC 2001 / BCRC 20586 / JCM 3761 / NBRC 0622 / NRRL Y-65 / CBS 138) (Yeast).